Reading from the N-terminus, the 96-residue chain is Antigen H4 (96 aa).

Residues 1–20 form a disordered region; sequence EFQEEIKEGVEEHKHEDDPE. Asn-34 carries N-linked (GlcNAc...) asparagine glycosylation.

This is Antigen H4 (H4) from Toxoplasma gondii.